The chain runs to 452 residues: NADH-quinone oxidoreductase subunit N 2 (452 aa).

The next 14 helical transmembrane spans lie at 6 to 26, 33 to 53, 70 to 90, 97 to 117, 120 to 140, 154 to 174, 194 to 214, 232 to 252, 258 to 278, 286 to 306, 311 to 331, 355 to 375, 387 to 407, and 432 to 452; these read VLIP…YGFI, TYIL…FNFG, TLRI…YSDL, SVEY…MIVA, LLIL…LAGF, YFIL…FFYA, ILLG…LAPF, FLST…FLSI, IQDL…VLAL, MLAY…LLPE, ISLI…FAFI, FCII…GFIV, GYGS…FYYL, and ALSG…LLIF.

Belongs to the complex I subunit 2 family. In terms of assembly, NDH-1 is composed of 14 different subunits. Subunits NuoA, H, J, K, L, M, N constitute the membrane sector of the complex.

The protein localises to the cell inner membrane. It catalyses the reaction a quinone + NADH + 5 H(+)(in) = a quinol + NAD(+) + 4 H(+)(out). Functionally, NDH-1 shuttles electrons from NADH, via FMN and iron-sulfur (Fe-S) centers, to quinones in the respiratory chain. The immediate electron acceptor for the enzyme in this species is believed to be ubiquinone. Couples the redox reaction to proton translocation (for every two electrons transferred, four hydrogen ions are translocated across the cytoplasmic membrane), and thus conserves the redox energy in a proton gradient. In Thermodesulfovibrio yellowstonii (strain ATCC 51303 / DSM 11347 / YP87), this protein is NADH-quinone oxidoreductase subunit N 2.